A 295-amino-acid polypeptide reads, in one-letter code: Glutamyl-Q tRNA(Asp) synthetase (295 aa).

L-glutamate-binding positions include Arg-6–Ser-10 and Glu-42. Positions Pro-9–Asn-19 match the 'HIGH' region motif. Zn(2+)-binding residues include Cys-93, Cys-95, Tyr-118, and Cys-122. Residues Tyr-177 and Arg-195 each contribute to the L-glutamate site. The short motif at Arg-233 to Arg-237 is the 'KMSKS' region element. Lys-236 is an ATP binding site.

The protein belongs to the class-I aminoacyl-tRNA synthetase family. GluQ subfamily. Zn(2+) serves as cofactor.

Catalyzes the tRNA-independent activation of glutamate in presence of ATP and the subsequent transfer of glutamate onto a tRNA(Asp). Glutamate is transferred on the 2-amino-5-(4,5-dihydroxy-2-cyclopenten-1-yl) moiety of the queuosine in the wobble position of the QUC anticodon. The polypeptide is Glutamyl-Q tRNA(Asp) synthetase (Deinococcus radiodurans (strain ATCC 13939 / DSM 20539 / JCM 16871 / CCUG 27074 / LMG 4051 / NBRC 15346 / NCIMB 9279 / VKM B-1422 / R1)).